We begin with the raw amino-acid sequence, 455 residues long: Glutamate-1-semialdehyde 2,1-aminomutase (455 aa).

Position 286 is an N6-(pyridoxal phosphate)lysine (Lys-286).

This sequence belongs to the class-III pyridoxal-phosphate-dependent aminotransferase family. HemL subfamily. In terms of assembly, homodimer. The cofactor is pyridoxal 5'-phosphate.

Its subcellular location is the cytoplasm. The catalysed reaction is (S)-4-amino-5-oxopentanoate = 5-aminolevulinate. The protein operates within porphyrin-containing compound metabolism; protoporphyrin-IX biosynthesis; 5-aminolevulinate from L-glutamyl-tRNA(Glu): step 2/2. This Clavibacter michiganensis subsp. michiganensis (strain NCPPB 382) protein is Glutamate-1-semialdehyde 2,1-aminomutase.